The chain runs to 188 residues: MLQIEFITDLGARVTVNVEHESRLLDVQRHYGRLGWTSGEIPSGGYQFPIENEADFDWSLIGARKWKSPEGEELVIHRGHAYRRRELEAVDSRKLKLPAAIKYSRGAKVSDPQHVREKADGDIEYVSLAIFRGGKRQERYAVPGGAAGNGQGRPAPQGQPAQARPQATAARPAARPPVQPGQEEETPF.

Positions 140 to 188 are disordered; the sequence is YAVPGGAAGNGQGRPAPQGQPAQARPQATAARPAARPPVQPGQEEETPF. Residues 152–173 show a composition bias toward low complexity; sequence GRPAPQGQPAQARPQATAARPA.

In terms of assembly, homopentamer arranged in a ring-structure; DNA binds between subunits and along the top of the ring. The pentamers self-associate to coat ssDNA in higher-ordered structures; oligomerization facilitates the assembly of extended nucleoprotein complexes. Self-assembly does not however require ssDNA-binding. Interacts with SSB.

Functionally, ssDNA-binding protein that contributes to the ionizing radiation resistance of D.radiodurans. Plays a role in DNA repair and genome reconstitution in a RecA-independent process. Required for recovery from severe genomic fragmentation as a result of exposure to severe levels of ionizing radiation. Binds ssDNA but not dsDNA. Stimulates annealing of complementary ssDNA. Does not complement an ssb disruption. The polypeptide is Single-stranded DNA-binding protein DdrB (ddrB) (Deinococcus radiodurans (strain ATCC 13939 / DSM 20539 / JCM 16871 / CCUG 27074 / LMG 4051 / NBRC 15346 / NCIMB 9279 / VKM B-1422 / R1)).